Here is a 445-residue protein sequence, read N- to C-terminus: C4-dicarboxylate transport protein (445 aa).

The next 8 membrane-spanning stretches (helical) occupy residues 17 to 37 (FYQI…LLGY), 56 to 76 (LVKM…IAAM), 91 to 111 (VYFL…SHIV), 157 to 177 (FVGG…LSLA), 200 to 220 (LVAI…AFTI), 233 to 253 (MLVG…LGMV), 319 to 339 (IYMT…LSLG), and 367 to 387 (AATL…ILGV).

The protein belongs to the dicarboxylate/amino acid:cation symporter (DAACS) (TC 2.A.23) family.

It is found in the cell inner membrane. Responsible for the transport of dicarboxylates such as succinate, fumarate, and malate from the periplasm across the membrane. The chain is C4-dicarboxylate transport protein from Bordetella avium (strain 197N).